A 223-amino-acid chain; its full sequence is Neurotrophic factor BDNF precursor form (223 aa).

The first 5 residues, 1–5, serve as a signal peptide directing secretion; sequence SCMKA. Positions 6 to 114 are excised as a propeptide; that stretch reads APMKEISIRG…AANMSMRVRR (109 aa). A glycan (N-linked (GlcNAc...) asparagine) is linked at Asn-107. Disulfide bonds link Cys-127-Cys-194 and Cys-172-Cys-223.

This sequence belongs to the NGF-beta family.

Its subcellular location is the secreted. In terms of biological role, promotes the survival of neuronal populations that are all located either in the central nervous system or directly connected to it. The sequence is that of Neurotrophic factor BDNF precursor form (BDNF) from Acrochordus javanicus (Javan wart snake).